We begin with the raw amino-acid sequence, 449 residues long: Phosphoglucosamine mutase (449 aa).

The active-site Phosphoserine intermediate is Ser-104. Mg(2+) contacts are provided by Ser-104, Asp-243, Asp-245, and Asp-247. At Ser-104 the chain carries Phosphoserine.

Belongs to the phosphohexose mutase family. Mg(2+) serves as cofactor. In terms of processing, activated by phosphorylation.

The enzyme catalyses alpha-D-glucosamine 1-phosphate = D-glucosamine 6-phosphate. Catalyzes the conversion of glucosamine-6-phosphate to glucosamine-1-phosphate. The polypeptide is Phosphoglucosamine mutase (Xanthomonas euvesicatoria pv. vesicatoria (strain 85-10) (Xanthomonas campestris pv. vesicatoria)).